We begin with the raw amino-acid sequence, 555 residues long: Protein NRT1/ PTR FAMILY 5.4 (555 aa).

2 helical membrane-spanning segments follow: residues 18–38 (AALF…GLAS) and 62–82 (WIGV…SILG). A Phosphothreonine modification is found at Thr86. The next 10 membrane-spanning stretches (helical) occupy residues 87 to 107 (VLLT…SVTV), 116 to 136 (VFFM…PCVM), 159 to 179 (NYWY…LIFI), 187 to 207 (LGFS…LIGI), 311 to 331 (IPIW…NTFF), 348 to 368 (IPPA…IPLY), 392 to 412 (IGVG…VEAK), 435 to 455 (LWLL…IVGM), 470 to 490 (IGAA…TGII), and 516 to 536 (YYYW…LFIA).

The protein belongs to the major facilitator superfamily. Proton-dependent oligopeptide transporter (POT/PTR) (TC 2.A.17) family. As to expression, expressed in roots and flowers.

The protein resides in the membrane. The polypeptide is Protein NRT1/ PTR FAMILY 5.4 (NPF5.4) (Arabidopsis thaliana (Mouse-ear cress)).